The primary structure comprises 757 residues: Zinc finger CCCH domain-containing protein 5 (757 aa).

The tract at residues 1 to 127 is disordered; it reads MEQANEKEEE…REEEERRWKD (127 aa). The segment covering 13-35 has biased composition (basic and acidic residues); that stretch reads HEEAAGEKESFEESKEKAAEMSR. The segment covering 36–50 has biased composition (basic residues); it reads KEKRKAMKKLKRKQV. The segment covering 51 to 127 has biased composition (basic and acidic residues); the sequence is RKEIAAKERE…REEEERRWKD (77 aa). Residues 240–268 form a C3H1-type 1 zinc finger; it reads EQDKAHCPFHLKTGACRFGQRCSRVHFYP. The region spanning 295-372 is the RRM domain; it reads YTDEEAELCY…KQVNCEFVNI (78 aa). The C3H1-type 2 zinc finger occupies 374–404; the sequence is RWKVAICGEYMKSRLKTCSRGSACNFIHCFR. Positions 441–757 are disordered; the sequence is HESSGSLNDS…EEEIERWRPV (317 aa). Positions 444 to 455 are enriched in polar residues; that stretch reads SGSLNDSISDLS. Basic and acidic residues predominate over residues 487–546; that stretch reads YHGDTQDSTREDKLRRHAENCHDGDDSPSRDGSLEREMYKERRYAKDTLHRDSRWSEHSP. 2 stretches are compositionally biased toward basic residues: residues 547–557 and 600–609; these read GHRVGRKRIHG and KTHRSSRKHS. Basic and acidic residues-rich tracts occupy residues 610-634, 644-672, and 681-721; these read REGSSADKEEGHEHDRVHTVSDKSH, RSSSRYSHEEDSTESRHHQHKESDKKRSV, and SDKD…ETHK. Residues 722-733 are compositionally biased toward basic residues; the sequence is ERRHRHRKRRRT.

The sequence is that of Zinc finger CCCH domain-containing protein 5 from Arabidopsis thaliana (Mouse-ear cress).